The sequence spans 118 residues: Non-specific lipid-transfer protein 2 (118 aa).

An N-terminal signal peptide occupies residues 1 to 25; that stretch reads MARGMKLACVVLVICMVVIAPMAEG. 4 cysteine pairs are disulfide-bonded: cysteine 29/cysteine 76, cysteine 39/cysteine 53, cysteine 54/cysteine 99, and cysteine 74/cysteine 113.

Belongs to the plant LTP family.

Functionally, plant non-specific lipid-transfer proteins transfer phospholipids as well as galactolipids across membranes. May play a role in wax or cutin deposition in the cell walls of expanding epidermal cells and certain secretory tissues. Binds saturated fatty acids, jasmonic acid and, with highest efficiency, unsaturated fatty acids and lysolipids. In Lens culinaris (Lentil), this protein is Non-specific lipid-transfer protein 2.